The sequence spans 46 residues: Ligatoxin-B (46 aa).

3 disulfides stabilise this stretch: cysteine 3–cysteine 40, cysteine 4–cysteine 32, and cysteine 16–cysteine 26.

It belongs to the plant thionin (TC 1.C.44) family.

It localises to the secreted. In terms of biological role, thionins are small plant proteins which are toxic to animal cells. They seem to exert their toxic effect at the level of the cell membrane. Their precise function is not known. The polypeptide is Ligatoxin-B (Phoradendron liga (Argentine mistletoe)).